The sequence spans 177 residues: ATP synthase subunit delta (177 aa).

Belongs to the ATPase delta chain family. F-type ATPases have 2 components, F(1) - the catalytic core - and F(0) - the membrane proton channel. F(1) has five subunits: alpha(3), beta(3), gamma(1), delta(1), epsilon(1). F(0) has three main subunits: a(1), b(2) and c(10-14). The alpha and beta chains form an alternating ring which encloses part of the gamma chain. F(1) is attached to F(0) by a central stalk formed by the gamma and epsilon chains, while a peripheral stalk is formed by the delta and b chains.

The protein localises to the cell membrane. Functionally, f(1)F(0) ATP synthase produces ATP from ADP in the presence of a proton or sodium gradient. F-type ATPases consist of two structural domains, F(1) containing the extramembraneous catalytic core and F(0) containing the membrane proton channel, linked together by a central stalk and a peripheral stalk. During catalysis, ATP synthesis in the catalytic domain of F(1) is coupled via a rotary mechanism of the central stalk subunits to proton translocation. This protein is part of the stalk that links CF(0) to CF(1). It either transmits conformational changes from CF(0) to CF(1) or is implicated in proton conduction. The chain is ATP synthase subunit delta from Streptococcus suis (strain 98HAH33).